A 483-amino-acid polypeptide reads, in one-letter code: MLLKKRSPTSILGTLALTGIVISSMIGGGIFSLPQNMVASASAGAVMLAWMLSGIGIFFIANTFKTLSIIRPDLKAGIYTYSREGFGPYVGFTIAWGYWLCQIFGNVDYAVITMDALNYFFPPYFAGGNTIPAILLGSLLIWIFNYIVLRGIRQASFVNIIGAVCTLIPLLLFILITARFFKFSIFKTDFWGTAPQHTLGSIGSQLKSTMLVTLWAFIGIEGAVVISGRAANLSSVGKATILGFSGCLLIYVLLSLLPFGSLFQYQLAKIADPSTAGVLNILVGKWGEVLMNTGLLIAVLTSWLSWTILASEIPYAAAKNGTFPECFAIENSKHAPSFSLFMTSGLMQITMLLVYFSSNAWNTMLEITGVMVLPAYLTSSLFLVKFSLSKKYPKQAAIKARIAMITSLLGSLYSLWLIYAGGLQHLFMVAILLALGIPFYVDSGIRHKQEKTFLNRKEILKMTIVALAALLAIFLFSANKIHL.

A run of 12 helical transmembrane segments spans residues 11-31, 41-61, 85-105, 124-144, 157-177, 208-228, 239-259, 289-309, 336-356, 364-384, 415-435, and 458-478; these read ILGT…GGIF, ASAG…FFIA, GFGP…QIFG, YFAG…IWIF, FVNI…ILIT, STML…VISG, ATIL…LLPF, VLMN…WTIL, PSFS…LVYF, MLEI…LFLV, LWLI…LLAL, and EILK…LFSA.

It belongs to the amino acid-polyamine-organocation (APC) superfamily. Basic amino acid/polyamine antiporter (APA) (TC 2.A.3.2) family.

It localises to the cell inner membrane. In terms of biological role, catalyzes the exchange of L-arginine for agmatine. The arginine uptake by the bacterium in the macrophage may be a virulence factor against the host innate immune response. The chain is Arginine/agmatine antiporter (aaxC) from Chlamydia trachomatis serovar A (strain ATCC VR-571B / DSM 19440 / HAR-13).